Reading from the N-terminus, the 312-residue chain is Olfactory receptor 1D2 (312 aa).

Topologically, residues 1 to 25 (MDGGNQSEGSEFLLLGMSESPEQQR) are extracellular. The N-linked (GlcNAc...) asparagine glycan is linked to asparagine 5. A helical transmembrane segment spans residues 26–49 (ILFWMFLSMYLVTVVGNVLIILAI). The Cytoplasmic segment spans residues 50–57 (SSDSCLHT). The helical transmembrane segment at 58–79 (PMYFFLANLSFTDLFFVTNTIP) threads the bilayer. Residues 80-100 (KMLVNLQSQNKAISYAGCLTQ) are Extracellular-facing. Cysteine 97 and cysteine 189 are disulfide-bonded. The helical transmembrane segment at 101–120 (LYFLVSLVALDNLILAVMAY) threads the bilayer. Topologically, residues 121 to 139 (DRYVAICCPLHYTTAMSPK) are cytoplasmic. A helical membrane pass occupies residues 140 to 158 (LCILLLSLCWVLSVLYGLI). Topologically, residues 159 to 196 (HTLLMTRVTFCGSRKIHYIFCEMYVLLRMACSNIQTNH) are extracellular. An N-linked (GlcNAc...) asparagine glycan is attached at asparagine 195. A helical membrane pass occupies residues 197-219 (TVLIATGCFIFLIPFGFVIISYV). The Cytoplasmic portion of the chain corresponds to 220–236 (LIIRAILRIPSLSKKYK). The helical transmembrane segment at 237 to 259 (AFSTCASHLGAVSLFYGTLCMVY) threads the bilayer. Topologically, residues 260–271 (LKPLHTYSVKDS) are extracellular. The helical transmembrane segment at 272–291 (VATVMYAVVTPMMNPFIYSL) threads the bilayer. Residues 292–312 (RNKDMHGALGRLLDKHFKRLT) are Cytoplasmic-facing.

It belongs to the G-protein coupled receptor 1 family.

The protein localises to the cell membrane. Odorant receptor. This Pan troglodytes (Chimpanzee) protein is Olfactory receptor 1D2 (OR1D2).